A 641-amino-acid chain; its full sequence is RING finger containing E3 ubiquitin-protein ligase WSV403 (641 aa).

The RING-type; atypical zinc finger occupies Cys329–Phe371.

It carries out the reaction S-ubiquitinyl-[E2 ubiquitin-conjugating enzyme]-L-cysteine + [acceptor protein]-L-lysine = [E2 ubiquitin-conjugating enzyme]-L-cysteine + N(6)-ubiquitinyl-[acceptor protein]-L-lysine.. It participates in protein modification; protein ubiquitination. Probable E3 ubiquitin-protein ligase which accepts ubiquitin from an E2 ubiquitin-conjugating enzyme in the form of a thioester and then directly transfers the ubiquitin to targeted substrates. The sequence is that of RING finger containing E3 ubiquitin-protein ligase WSV403 from White spot syndrome virus (isolate Shrimp/China/Tongan/1996) (WSSV).